The following is a 109-amino-acid chain: Small ribosomal subunit protein uS10c (109 aa).

Belongs to the universal ribosomal protein uS10 family. Part of the 30S ribosomal subunit.

It is found in the plastid. It localises to the chloroplast. In terms of biological role, involved in the binding of tRNA to the ribosomes. In Cyanidium caldarium (Red alga), this protein is Small ribosomal subunit protein uS10c.